We begin with the raw amino-acid sequence, 178 residues long: MSTPPLAPTGMASGPFGGPQAQQAAREVNTATLCRIGQETVQDIVYRTMEIFQLLRNMQLPNGVTYHTGTYQDRLTKLQDHLRQLSILFRKLRLVYDKCNENCGGMDPIPVEQLIPYVDEDGSKNDDRAGPPRFASEERREIVEVNKKLKQKNQQLKQIMDQLRNLIWDINAMLAMRN.

A disordered region spans residues 1–22 (MSTPPLAPTGMASGPFGGPQAQ). S2 carries the N-acetylserine modification. Residues 134-173 (FASEERREIVEVNKKLKQKNQQLKQIMDQLRNLIWDINAM) are a coiled coil.

It belongs to the Mediator complex subunit 30 family. In terms of assembly, component of the Mediator complex, which is composed of MED1, MED4, MED6, MED7, MED8, MED9, MED10, MED11, MED12, MED13, MED13L, MED14, MED15, MED16, MED17, MED18, MED19, MED20, MED21, MED22, MED23, MED24, MED25, MED26, MED27, MED29, MED30, MED31, CCNC, CDK8 and CDC2L6/CDK11. The MED12, MED13, CCNC and CDK8 subunits form a distinct module termed the CDK8 module. Mediator containing the CDK8 module is less active than Mediator lacking this module in supporting transcriptional activation. Individual preparations of the Mediator complex lacking one or more distinct subunits have been variously termed ARC, CRSP, DRIP, PC2, SMCC and TRAP.

The protein localises to the nucleus. Its function is as follows. Component of the Mediator complex, a coactivator involved in the regulated transcription of nearly all RNA polymerase II-dependent genes. Mediator functions as a bridge to convey information from gene-specific regulatory proteins to the basal RNA polymerase II transcription machinery. Mediator is recruited to promoters by direct interactions with regulatory proteins and serves as a scaffold for the assembly of a functional preinitiation complex with RNA polymerase II and the general transcription factors. The chain is Mediator of RNA polymerase II transcription subunit 30 (Med30) from Mus musculus (Mouse).